The sequence spans 242 residues: Uridylate kinase (242 aa).

ATP contacts are provided by residues 15–18 (KISG), G58, and R62. Residues D77 and 139–146 (TGNPFFTT) each bind UMP. Residues T166, Y172, and D175 each contribute to the ATP site.

This sequence belongs to the UMP kinase family. As to quaternary structure, homohexamer.

It is found in the cytoplasm. It catalyses the reaction UMP + ATP = UDP + ADP. Its pathway is pyrimidine metabolism; CTP biosynthesis via de novo pathway; UDP from UMP (UMPK route): step 1/1. Its activity is regulated as follows. Inhibited by UTP. Functionally, catalyzes the reversible phosphorylation of UMP to UDP. The sequence is that of Uridylate kinase from Buchnera aphidicola subsp. Acyrthosiphon pisum (strain APS) (Acyrthosiphon pisum symbiotic bacterium).